The following is a 201-amino-acid chain: Large ribosomal subunit protein uL4 (201 aa).

A disordered region spans residues 39-67 (ARQGSRAQKTRSEVAGGGRKPWKQKGSGR).

This sequence belongs to the universal ribosomal protein uL4 family. In terms of assembly, part of the 50S ribosomal subunit.

Its function is as follows. One of the primary rRNA binding proteins, this protein initially binds near the 5'-end of the 23S rRNA. It is important during the early stages of 50S assembly. It makes multiple contacts with different domains of the 23S rRNA in the assembled 50S subunit and ribosome. In terms of biological role, forms part of the polypeptide exit tunnel. This Marinomonas sp. (strain MWYL1) protein is Large ribosomal subunit protein uL4.